The chain runs to 321 residues: Aspartate carbamoyltransferase catalytic subunit (321 aa).

Carbamoyl phosphate is bound by residues Arg64 and Thr65. Position 92 (Lys92) interacts with L-aspartate. Carbamoyl phosphate-binding residues include Arg114, His144, and Gln147. The L-aspartate site is built by Arg177 and Arg232. Residues Gly273 and Pro274 each coordinate carbamoyl phosphate.

This sequence belongs to the aspartate/ornithine carbamoyltransferase superfamily. ATCase family. Heterododecamer (2C3:3R2) of six catalytic PyrB chains organized as two trimers (C3), and six regulatory PyrI chains organized as three dimers (R2).

The enzyme catalyses carbamoyl phosphate + L-aspartate = N-carbamoyl-L-aspartate + phosphate + H(+). The protein operates within pyrimidine metabolism; UMP biosynthesis via de novo pathway; (S)-dihydroorotate from bicarbonate: step 2/3. Catalyzes the condensation of carbamoyl phosphate and aspartate to form carbamoyl aspartate and inorganic phosphate, the committed step in the de novo pyrimidine nucleotide biosynthesis pathway. The chain is Aspartate carbamoyltransferase catalytic subunit from Alkalilimnicola ehrlichii (strain ATCC BAA-1101 / DSM 17681 / MLHE-1).